The sequence spans 866 residues: Fibrinogen alpha chain (866 aa).

The signal sequence occupies residues 1-19 (MFSMRIVCLVLSVVGTAWT). Ser-22 is subject to Phosphoserine. The tract at residues 36–38 (GPR) is alpha-chain polymerization, binding distal domain of another fibrin gamma chain. Residue Ser-45 is modified to Phosphoserine; by FAM20C. Ser-50 carries the post-translational modification Phosphoserine. Ser-56 bears the Phosphoserine; by FAM20C mark. The stretch at 68-631 (CRMKGLIDEV…GHAKSRPVRD (564 aa)) forms a coiled coil. Residues 262–460 (ERPGGNEITR…SGSTTTTRRS (199 aa)) are disordered. The segment covering 270 to 299 (TRGGSTSYGTGSETESPRNPSSAGSWNSGS) has biased composition (low complexity). 3 positions are modified to phosphoserine: Ser-281, Ser-291, and Ser-294. Thr-320 carries an O-linked (GalNAc...) threonine glycan. Lys-322 participates in a covalent cross-link: Isoglutamyl lysine isopeptide (Lys-Gln) (interchain with Q-41 in alpha-2-antiplasmin). An Isoglutamyl lysine isopeptide (Gln-Lys) (interchain with K-?) cross-link involves residue Gln-347. A glycan (O-linked (GalNAc...) serine) is linked at Ser-351. Positions 354–391 (PGSTGTWNPGSSERGSAGHWTSESSVSGSTGQWHSESG) are enriched in polar residues. Ser-364 carries the phosphoserine; by FAM20C modification. An Isoglutamyl lysine isopeptide (Gln-Lys) (interchain with K-?) cross-link involves residue Gln-385. Position 412 is a phosphothreonine (Thr-412). A compositionally biased stretch (basic and acidic residues) spans 424-449 (TRREYHTEKLVTSKGDKELRTGKEKV). The span at 450–460 (TSGSTTTTRRS) shows a compositional bias: low complexity. Ser-451 is subject to Phosphoserine. A glycan (N-linked (GlcNAc...) asparagine; in variant Caracas-2) is linked at Ser-453. Cysteines 461 and 491 form a disulfide. Residue Ser-501 is modified to Phosphoserine. At Thr-505 the chain carries Phosphothreonine. Ser-524 is modified (phosphoserine; by FAM20C). Residues Lys-527 and Lys-558 each participate in an isoglutamyl lysine isopeptide (Lys-Gln) (interchain with Q-?) cross-link. The segment at 543-638 (ETESRGSESG…VRDCDDVLQT (96 aa)) is disordered. A Phosphoserine; by FAM20C modification is found at Ser-560. Pro-565 is modified (4-hydroxyproline; by P4HA1). Residues Lys-575, Lys-581, and Lys-599 each participate in an isoglutamyl lysine isopeptide (Lys-Gln) (interchain with Q-?) cross-link. A compositionally biased stretch (low complexity) spans 575–589 (KSSSYSKQFTSSTSY). Basic and acidic residues predominate over residues 594-617 (STFESKSYKMADEAGSEADHEGTH). The residue at position 609 (Ser-609) is a Phosphoserine; by FAM20C. Basic residues predominate over residues 618–627 (STKRGHAKSR). The 242-residue stretch at 623–864 (HAKSRPVRDC…AVRMKIRPLV (242 aa)) folds into the Fibrinogen C-terminal domain. N-linked (GlcNAc...) asparagine glycosylation is present at Asn-686. Ca(2+) is bound by residues Asp-791, Asp-793, Trp-795, and Glu-797. A disulfide bridge connects residues Cys-799 and Cys-812.

In terms of assembly, heterohexamer; disulfide linked. Contains 2 sets of 3 non-identical chains (alpha, beta and gamma). The 2 heterotrimers are in head to head conformation with the N-termini in a small central domain. (Microbial infection) Interacts with Staphylococcus aureus protein Fib; this interaction inhibits fibrinogen-dependent platelet aggregation and protects the bacteria form phagocytosis. In terms of processing, the alpha chain is normally not N-glycosylated, even though glycosylation at Asn-686 was observed when a fragment of the protein was expressed in insect cells. It is well known that heterologous expression of isolated domains can lead to adventitious protein modifications. Besides, glycosylation at Asn-686 is supported by large-scale glycoproteomics studies, but the evidence is still quite tenuous. Most likely, Asn-686 is not glycosylated in the healthy human body, or only with low efficiency. O-glycosylated. Post-translationally, forms F13A-mediated cross-links between a glutamine and the epsilon-amino group of a lysine residue, forming fibronectin-fibrinogen heteropolymers. In terms of processing, about one-third of the alpha chains in the molecules in blood were found to be phosphorylated. Conversion of fibrinogen to fibrin is triggered by thrombin, which cleaves fibrinopeptides A and B from alpha and beta chains, and thus exposes the N-terminal polymerization sites responsible for the formation of the soft clot. The soft clot is converted into the hard clot by factor XIIIA which catalyzes the epsilon-(gamma-glutamyl)lysine cross-linking between gamma chains (stronger) and between alpha chains (weaker) of different monomers. Post-translationally, phosphorylated by FAM20C in the extracellular medium. As to expression, detected in blood plasma (at protein level).

Its subcellular location is the secreted. Its function is as follows. Cleaved by the protease thrombin to yield monomers which, together with fibrinogen beta (FGB) and fibrinogen gamma (FGG), polymerize to form an insoluble fibrin matrix. Fibrin has a major function in hemostasis as one of the primary components of blood clots. In addition, functions during the early stages of wound repair to stabilize the lesion and guide cell migration during re-epithelialization. Was originally thought to be essential for platelet aggregation, based on in vitro studies using anticoagulated blood. However, subsequent studies have shown that it is not absolutely required for thrombus formation in vivo. Enhances expression of SELP in activated platelets via an ITGB3-dependent pathway. Maternal fibrinogen is essential for successful pregnancy. Fibrin deposition is also associated with infection, where it protects against IFNG-mediated hemorrhage. May also facilitate the immune response via both innate and T-cell mediated pathways. The protein is Fibrinogen alpha chain (FGA) of Homo sapiens (Human).